Here is a 225-residue protein sequence, read N- to C-terminus: UPF0173 metal-dependent hydrolase PH1671 (225 aa).

Belongs to the UPF0173 family.

The protein is UPF0173 metal-dependent hydrolase PH1671 of Pyrococcus horikoshii (strain ATCC 700860 / DSM 12428 / JCM 9974 / NBRC 100139 / OT-3).